Reading from the N-terminus, the 299-residue chain is HTH-type transcriptional repressor CarH (299 aa).

The 70-residue stretch at 5–74 (TYRINIAAEL…ISEAAKLLPQ (70 aa)) folds into the HTH merR-type domain. A DNA-binding region (H-T-H motif) is located at residues 8–27 (INIAAELAGVRVELIRAWER). A B12-binding domain is found at 180-299 (HRHGVLACFP…EEDWDRLAGT (120 aa)).

The protein belongs to the CarA/CarH B12-binding photoregulator family. As to quaternary structure, forms oligomers. Interacts with CarS.

With respect to regulation, requires cobalamin (vitamin B12) for repressor activity. In the dark, binding of cobalamin to CarH induces its oligomerization, which enhances binding to the DNA and repressor activity. Light causes cobalamin photolysis and disruption of the cobalamin-CarH complex, which decreases interaction with DNA and allows transcription of the carB operon. Interaction with CarS also prevents binding to DNA. Its function is as follows. Negative regulator of the carB operon in the dark. Binds specifically to the CarA operator, in the region around the carB promoter, which blocks access to the RNA polymerase. The protein is HTH-type transcriptional repressor CarH (carH) of Myxococcus xanthus.